A 335-amino-acid chain; its full sequence is Anthranilate phosphoribosyltransferase (335 aa).

5-phospho-alpha-D-ribose 1-diphosphate is bound by residues Gly-80, 83–84, Thr-88, 90–93, 108–116, and Ser-120; these read GD, NIST, and KHGNRAVSS. Gly-80 contacts anthranilate. Residue Ser-92 participates in Mg(2+) binding. Asn-111 provides a ligand contact to anthranilate. Arg-166 contributes to the anthranilate binding site. Mg(2+)-binding residues include Asp-225 and Glu-226.

It belongs to the anthranilate phosphoribosyltransferase family. As to quaternary structure, homodimer. Requires Mg(2+) as cofactor.

The enzyme catalyses N-(5-phospho-beta-D-ribosyl)anthranilate + diphosphate = 5-phospho-alpha-D-ribose 1-diphosphate + anthranilate. Its pathway is amino-acid biosynthesis; L-tryptophan biosynthesis; L-tryptophan from chorismate: step 2/5. Functionally, catalyzes the transfer of the phosphoribosyl group of 5-phosphorylribose-1-pyrophosphate (PRPP) to anthranilate to yield N-(5'-phosphoribosyl)-anthranilate (PRA). The polypeptide is Anthranilate phosphoribosyltransferase (Clostridium kluyveri (strain NBRC 12016)).